The primary structure comprises 846 residues: Translation initiation factor IF-2 (846 aa).

A disordered region spans residues 198 to 219 (YKREEEEKKSKAKKAGGKGFKK). Residues 207-219 (SKAKKAGGKGFKK) are compositionally biased toward basic residues. In terms of domain architecture, tr-type G spans 345 to 512 (SRAPVVTIMG…AVLLQSEVLE (168 aa)). Residues 354 to 361 (GHVDHGKT) form a G1 region. 354-361 (GHVDHGKT) lines the GTP pocket. The G2 stretch occupies residues 379 to 383 (GITQH). The G3 stretch occupies residues 400–403 (DTPG). GTP is bound by residues 400 to 404 (DTPGH) and 454 to 457 (NKID). A G4 region spans residues 454–457 (NKID). The segment at 490–492 (SAK) is G5.

Belongs to the TRAFAC class translation factor GTPase superfamily. Classic translation factor GTPase family. IF-2 subfamily.

It is found in the cytoplasm. Its function is as follows. One of the essential components for the initiation of protein synthesis. Protects formylmethionyl-tRNA from spontaneous hydrolysis and promotes its binding to the 30S ribosomal subunits. Also involved in the hydrolysis of GTP during the formation of the 70S ribosomal complex. In Francisella tularensis subsp. holarctica (strain OSU18), this protein is Translation initiation factor IF-2.